The following is a 363-amino-acid chain: UDP-3-O-acylglucosamine N-acyltransferase (363 aa).

The active-site Proton acceptor is His-252.

This sequence belongs to the transferase hexapeptide repeat family. LpxD subfamily. Homotrimer.

It carries out the reaction a UDP-3-O-[(3R)-3-hydroxyacyl]-alpha-D-glucosamine + a (3R)-hydroxyacyl-[ACP] = a UDP-2-N,3-O-bis[(3R)-3-hydroxyacyl]-alpha-D-glucosamine + holo-[ACP] + H(+). It functions in the pathway bacterial outer membrane biogenesis; LPS lipid A biosynthesis. In terms of biological role, catalyzes the N-acylation of UDP-3-O-acylglucosamine using 3-hydroxyacyl-ACP as the acyl donor. Is involved in the biosynthesis of lipid A, a phosphorylated glycolipid that anchors the lipopolysaccharide to the outer membrane of the cell. In Cupriavidus taiwanensis (strain DSM 17343 / BCRC 17206 / CCUG 44338 / CIP 107171 / LMG 19424 / R1) (Ralstonia taiwanensis (strain LMG 19424)), this protein is UDP-3-O-acylglucosamine N-acyltransferase.